The chain runs to 84 residues: Gomesin-like peptide (84 aa).

The signal sequence occupies residues 1-23 (MNRTRALVCLFLAVLILAHESEA). A Pyrrolidone carboxylic acid modification is found at Q24. Intrachain disulfides connect C25–C38 and C29–C34. Residue R41 is modified to Arginine amide. A propeptide spanning residues 42–84 (GKRSVEEPSGGAQVVEKRAVDDADIPSAVEERELDEEESIEFR) is cleaved from the precursor.

As to expression, expressed by the venom gland.

Its subcellular location is the secreted. Functionally, antibacterial peptide. The polypeptide is Gomesin-like peptide (Hadronyche infensa (Fraser island funnel-web spider)).